We begin with the raw amino-acid sequence, 341 residues long: L-threonine 3-dehydrogenase (341 aa).

Residue Cys-38 coordinates Zn(2+). Catalysis depends on charge relay system residues Thr-40 and His-43. Zn(2+) contacts are provided by His-63, Glu-64, Cys-93, Cys-96, Cys-99, and Cys-107. Residues Ile-175, Asp-195, Arg-200, 262-264 (LGI), and 286-287 (IY) contribute to the NAD(+) site.

It belongs to the zinc-containing alcohol dehydrogenase family. In terms of assembly, homotetramer. It depends on Zn(2+) as a cofactor.

The protein resides in the cytoplasm. It carries out the reaction L-threonine + NAD(+) = (2S)-2-amino-3-oxobutanoate + NADH + H(+). The protein operates within amino-acid degradation; L-threonine degradation via oxydo-reductase pathway; glycine from L-threonine: step 1/2. In terms of biological role, catalyzes the NAD(+)-dependent oxidation of L-threonine to 2-amino-3-ketobutyrate. The protein is L-threonine 3-dehydrogenase of Shewanella pealeana (strain ATCC 700345 / ANG-SQ1).